We begin with the raw amino-acid sequence, 117 residues long: Large ribosomal subunit protein bL20 (117 aa).

It belongs to the bacterial ribosomal protein bL20 family.

Its function is as follows. Binds directly to 23S ribosomal RNA and is necessary for the in vitro assembly process of the 50S ribosomal subunit. It is not involved in the protein synthesizing functions of that subunit. The polypeptide is Large ribosomal subunit protein bL20 (Mesomycoplasma hyopneumoniae (strain 7448) (Mycoplasma hyopneumoniae)).